The chain runs to 530 residues: Calcium/calmodulin-dependent protein kinase type II alpha chain (530 aa).

The region spanning 12 to 272 (DNYDIKEELG…AAEALKHPWI (261 aa)) is the Protein kinase domain. Residues 20 to 28 (LGKGAFSIV) and Lys-43 each bind ATP. Asp-136 acts as the Proton acceptor in catalysis. Residue Thr-287 is modified to Phosphothreonine; by autocatalysis. Residues 291–301 (LKKFNARRKLK) are calmodulin-binding. A phosphothreonine; by autocatalysis mark is found at Thr-306 and Thr-307. A disordered region spans residues 320-358 (ITKKGEGSQVKESTDSSSTTLEDDDIKEDKKGTVDRSTT). The residue at position 327 (Ser-327) is a Phosphoserine.

This sequence belongs to the protein kinase superfamily. CAMK Ser/Thr protein kinase family. CaMK subfamily. In terms of assembly, interacts with CASK. Post-translationally, autophosphorylation at Thr-287 is independent of autophosphorylation at Thr-306 and Thr-307. As to expression, expressed at a high level in the central nervous system during the late embryonic stage. In adults, expression is more abundant in the head than in the body.

It carries out the reaction L-seryl-[protein] + ATP = O-phospho-L-seryl-[protein] + ADP + H(+). The enzyme catalyses L-threonyl-[protein] + ATP = O-phospho-L-threonyl-[protein] + ADP + H(+). CASK plays a role in regulation of CaMKII autophosphorylation. When complexed with CASK and in the presence Ca[2+]/CaM, autophosphorylation of Thr-287 causes constitutive activation of the kinase. In the absence of Ca[2+]/CaM, autophosphorylation of Thr-306 causes inactivation of the kinase. A key regulator of plasticity in synaptic physiology and behavior, alterations in its activity produce pleiotrophic effects that involve synaptic transmission and development as well as various aspects of behavior. Directly modulates eag potassium channels. In Drosophila melanogaster (Fruit fly), this protein is Calcium/calmodulin-dependent protein kinase type II alpha chain (CaMKII).